Reading from the N-terminus, the 337-residue chain is Mitochondrial amidoxime-reducing component 1 (337 aa).

Glycine 2 carries N-myristoyl glycine lipidation. Topologically, residues 2-20 (GAAGSSALARFVLLAQSRP) are mitochondrial matrix. A helical; Signal-anchor for type II membrane protein membrane pass occupies residues 21 to 40 (GWLGVAALGLTAVALGAVAW). Residues 41–337 (RRAWPTRRRR…VGDPVYLLGQ (297 aa)) lie on the Cytoplasmic side of the membrane. Mo-molybdopterin-binding residues include lysine 67, serine 68, and arginine 92. Residues 93 to 183 (FWLVINQEGN…KSQPYRLVHF (91 aa)) are MOSC N-terminal region. Residues 187–335 (MRPRRPHQIA…IKVGDPVYLL (149 aa)) enclose the MOSC domain. Mo-molybdopterin-binding residues include threonine 210, serine 211, arginine 238, asparagine 240, serine 271, arginine 272, cysteine 273, and tyrosine 317.

As to quaternary structure, component of a complex composed of cytochrome b5, NADH-cytochrome b5 reductase and MTARC1. Mo-molybdopterin serves as cofactor.

Its subcellular location is the mitochondrion outer membrane. It localises to the membrane. The catalysed reaction is N(omega)-hydroxy-L-arginine + 2 Fe(II)-[cytochrome b5] + 2 H(+) = L-arginine + 2 Fe(III)-[cytochrome b5] + H2O. Functionally, catalyzes the reduction of N-oxygenated molecules, acting as a counterpart of cytochrome P450 and flavin-containing monooxygenases in metabolic cycles. As a component of prodrug-converting system, reduces a multitude of N-hydroxylated prodrugs particularly amidoximes, leading to increased drug bioavailability. May be involved in mitochondrial N(omega)-hydroxy-L-arginine (NOHA) reduction, regulating endogenous nitric oxide levels and biosynthesis. Postulated to cleave the N-OH bond of N-hydroxylated substrates in concert with electron transfer from NADH to cytochrome b5 reductase then to cytochrome b5, the ultimate electron donor that primes the active site for substrate reduction. The polypeptide is Mitochondrial amidoxime-reducing component 1 (Homo sapiens (Human)).